Here is a 177-residue protein sequence, read N- to C-terminus: Bifunctional protein PyrR (177 aa).

The short motif at 99-111 (VILIDDVLYTGRT) is the PRPP-binding element.

This sequence belongs to the purine/pyrimidine phosphoribosyltransferase family. PyrR subfamily. Homodimer and homohexamer; in equilibrium.

It catalyses the reaction UMP + diphosphate = 5-phospho-alpha-D-ribose 1-diphosphate + uracil. Regulates transcriptional attenuation of the pyrimidine nucleotide (pyr) operon by binding in a uridine-dependent manner to specific sites on pyr mRNA. This disrupts an antiterminator hairpin in the RNA and favors formation of a downstream transcription terminator, leading to a reduced expression of downstream genes. In terms of biological role, also displays a weak uracil phosphoribosyltransferase activity which is not physiologically significant. The sequence is that of Bifunctional protein PyrR from Pediococcus pentosaceus (strain ATCC 25745 / CCUG 21536 / LMG 10740 / 183-1w).